Consider the following 260-residue polypeptide: Snake venom serine protease homolog 2A (260 aa).

The N-terminal stretch at 1–18 is a signal peptide; that stretch reads MVLIRVLANLLILQLSYA. Positions 19 to 24 are excised as a propeptide; it reads QKSSEL. The 227-residue stretch at 25–251 folds into the Peptidase S1 domain; the sequence is IIGGDECNIN…HLDWIKSIIA (227 aa). Disulfide bonds link C31–C165, C52–C68, C100–C258, C144–C212, C176–C191, and C202–C227. N83, N123, and N124 each carry an N-linked (GlcNAc...) asparagine glycan.

The protein belongs to the peptidase S1 family. Snake venom subfamily. Expressed by the venom gland.

It localises to the secreted. Functionally, snake venom serine protease homolog that may act in the hemostasis system of the prey. The chain is Snake venom serine protease homolog 2A (TLG2A) from Craspedocephalus gramineus (Bamboo pit viper).